The following is a 118-amino-acid chain: Large ribosomal subunit protein bL19 (118 aa).

Belongs to the bacterial ribosomal protein bL19 family.

This protein is located at the 30S-50S ribosomal subunit interface and may play a role in the structure and function of the aminoacyl-tRNA binding site. The polypeptide is Large ribosomal subunit protein bL19 (Campylobacter lari (strain RM2100 / D67 / ATCC BAA-1060)).